A 756-amino-acid polypeptide reads, in one-letter code: ATP-dependent zinc metalloprotease FtsH (756 aa).

Over 1 to 44 (MGVPAGMPHPNGLQPQRKDKALAQNPNTPQKGSEAFLKKLIHSS) the chain is Cytoplasmic. A helical transmembrane segment spans residues 45–65 (WFFPGAAIVVMLGFLMASFFT). Residues 66–148 (QPSRQVDTNV…SYTDQPVEHS (83 aa)) lie on the Extracellular side of the membrane. The chain crosses the membrane as a helical span at residues 149 to 169 (FLGSLVSLLLPILLFGVLFWF). Residues 170–756 (LMGRVGGGSS…NQNGAENERG (587 aa)) lie on the Cytoplasmic side of the membrane. 241–248 (GPPGTGKT) provides a ligand contact to ATP. His-463 provides a ligand contact to Zn(2+). The active site involves Glu-464. His-467 and Asp-539 together coordinate Zn(2+). Basic and acidic residues-rich tracts occupy residues 647-662 (PEREHWYSKPTRERTD) and 672-681 (LAKEAEKSEE). The segment at 647–756 (PEREHWYSKP…NQNGAENERG (110 aa)) is disordered. Low complexity-rich tracts occupy residues 684 to 703 (AEAPTVPVAPAAPAQQVPVA) and 713 to 724 (PLTDPDADPTVA). The segment covering 744-756 (GTPNQNGAENERG) has biased composition (polar residues).

It in the central section; belongs to the AAA ATPase family. This sequence in the C-terminal section; belongs to the peptidase M41 family. Homohexamer. The cofactor is Zn(2+).

It is found in the cell membrane. Its function is as follows. Acts as a processive, ATP-dependent zinc metallopeptidase for both cytoplasmic and membrane proteins. Plays a role in the quality control of integral membrane proteins. The polypeptide is ATP-dependent zinc metalloprotease FtsH (Rothia mucilaginosa (strain DY-18) (Stomatococcus mucilaginosus)).